Reading from the N-terminus, the 1392-residue chain is ATP-dependent helicase/nuclease subunit A (1392 aa).

The 487-residue stretch at 3-489 folds into the UvrD-like helicase ATP-binding domain; the sequence is NPKWTPAQQA…IDLNQNFRSR (487 aa). Residue 24–31 participates in ATP binding; sequence AAAGSGKT. Disordered stretches follow at residues 291–319, 556–594, and 1051–1126; these read RGSK…KARD, RGAE…LEEA, and GPVQ…LDTK. Composition is skewed to basic and acidic residues over residues 305 to 319 and 569 to 583; these read ENSK…KARD and AKGE…REPE. The region spanning 556–886 is the UvrD-like helicase C-terminal domain; that stretch reads RGAEDAATGA…RFITVHSSKG (331 aa). Over residues 584-594 the composition is skewed to acidic residues; it reads SGDDESSLEEA. Residues 1088-1113 show a composition bias toward basic and acidic residues; the sequence is ASGKTEIPGETKNSEETKTSEDKKNL.

This sequence belongs to the helicase family. AddA subfamily. Heterodimer of AddA and AddB/RexB. Mg(2+) serves as cofactor.

The enzyme catalyses Couples ATP hydrolysis with the unwinding of duplex DNA by translocating in the 3'-5' direction.. It catalyses the reaction ATP + H2O = ADP + phosphate + H(+). In terms of biological role, the heterodimer acts as both an ATP-dependent DNA helicase and an ATP-dependent, dual-direction single-stranded exonuclease. Recognizes the chi site generating a DNA molecule suitable for the initiation of homologous recombination. The AddA nuclease domain is required for chi fragment generation; this subunit has the helicase and 3' -&gt; 5' nuclease activities. The polypeptide is ATP-dependent helicase/nuclease subunit A (Desulfitobacterium hafniense (strain Y51)).